Reading from the N-terminus, the 1085-residue chain is DNA-directed RNA polymerase subunit beta (1085 aa).

Belongs to the RNA polymerase beta chain family. In plastids the minimal PEP RNA polymerase catalytic core is composed of four subunits: alpha, beta, beta', and beta''. When a (nuclear-encoded) sigma factor is associated with the core the holoenzyme is formed, which can initiate transcription.

It localises to the plastid. Its subcellular location is the chloroplast. The catalysed reaction is RNA(n) + a ribonucleoside 5'-triphosphate = RNA(n+1) + diphosphate. Functionally, DNA-dependent RNA polymerase catalyzes the transcription of DNA into RNA using the four ribonucleoside triphosphates as substrates. This Physcomitrium patens (Spreading-leaved earth moss) protein is DNA-directed RNA polymerase subunit beta.